A 250-amino-acid polypeptide reads, in one-letter code: Kv channel-interacting protein 4 (250 aa).

A KIS region spans residues 2-44 (NVRRVESISAQLEEASSTGGFLYAQNNTKRSIKERLMKLLPCS). S17 and S56 each carry phosphoserine. Residues 61 to 117 (LEMATVRHRPEALELLEAQSKFTKKELQILYRGFKNECPSGVVNEETFKEIYSQFFP) enclose the EF-hand 1; degenerate domain. 3 EF-hand domains span residues 120 to 155 (DSTT…LLRG), 156 to 191 (TVQE…IYDM), and 204 to 239 (APRQ…DENI). Ca(2+)-binding residues include D133, D135, N137, D144, D169, N171, D173, Y175, E180, D217, N219, D221, and E228. An interaction with KCND2 region spans residues 237–250 (ENIMRSMQLFENVI).

Belongs to the recoverin family. In terms of assembly, component of heteromultimeric potassium channels. Identified in potassium channel complexes containing KCND1, KCND2, KCND3, KCNIP1, KCNIP2, KCNIP3, KCNIP4, DPP6 and DPP10. Interacts with the C-terminus of PSEN2 and probably PSEN1. Interacts with KCND2 and KCND3. As to expression, expressed in brain. Highly expressed by neurons in layers II-IV of cortex and in hippocampus, thalamus and the Purkinje cell layer of the cerebellum.

The protein localises to the cell membrane. It localises to the cytoplasm. It is found in the peroxisome. In terms of biological role, regulatory subunit of Kv4/D (Shal)-type voltage-gated rapidly inactivating A-type potassium channels, such as KCND2/Kv4.2 and KCND3/Kv4.3. Modulates channel expression at the cell membrane, gating characteristics, inactivation kinetics and rate of recovery from inactivation in a calcium-dependent and isoform-specific manner. In Mus musculus (Mouse), this protein is Kv channel-interacting protein 4 (Kcnip4).